The following is a 548-amino-acid chain: 2-succinyl-5-enolpyruvyl-6-hydroxy-3-cyclohexene-1-carboxylate synthase (548 aa).

Belongs to the TPP enzyme family. MenD subfamily. In terms of assembly, homodimer. Requires Mg(2+) as cofactor. It depends on Mn(2+) as a cofactor. The cofactor is thiamine diphosphate.

It catalyses the reaction isochorismate + 2-oxoglutarate + H(+) = 5-enolpyruvoyl-6-hydroxy-2-succinyl-cyclohex-3-ene-1-carboxylate + CO2. It participates in quinol/quinone metabolism; 1,4-dihydroxy-2-naphthoate biosynthesis; 1,4-dihydroxy-2-naphthoate from chorismate: step 2/7. It functions in the pathway quinol/quinone metabolism; menaquinone biosynthesis. Catalyzes the thiamine diphosphate-dependent decarboxylation of 2-oxoglutarate and the subsequent addition of the resulting succinic semialdehyde-thiamine pyrophosphate anion to isochorismate to yield 2-succinyl-5-enolpyruvyl-6-hydroxy-3-cyclohexene-1-carboxylate (SEPHCHC). The protein is 2-succinyl-5-enolpyruvyl-6-hydroxy-3-cyclohexene-1-carboxylate synthase of Mycobacterium marinum (strain ATCC BAA-535 / M).